We begin with the raw amino-acid sequence, 1031 residues long: Kinesin heavy chain (1031 aa).

One can recognise a Kinesin motor domain in the interval 8–325 (NIKVVCRVRP…LMFGQRAKTI (318 aa)). 84 to 91 (GQTSSGKT) is an ATP binding site. A coiled-coil region spans residues 393 to 857 (PKQMTVHVSE…RDNADLRCEL (465 aa)). Over residues 673 to 686 (TDQEDKKREEEDKM) the composition is skewed to basic and acidic residues. Disordered stretches follow at residues 673-692 (TDQE…ATEM) and 906-1031 (RNFA…EQGS). Residues 858–1031 (PKLERRLRAT…PLTTSGEQGS (174 aa)) are globular. A compositionally biased stretch (gly residues) spans 932-949 (GSTGIRGGGYSGIRGGGS). 2 stretches are compositionally biased toward polar residues: residues 964 to 977 (SHNN…NPND) and 1014 to 1031 (RNNT…EQGS).

Belongs to the TRAFAC class myosin-kinesin ATPase superfamily. Kinesin family. Kinesin subfamily. In terms of assembly, oligomer composed of two heavy chains and two light chains.

The protein resides in the cytoplasm. It localises to the cytoskeleton. Its function is as follows. Kinesin is a microtubule-associated force-producing protein that may play a role in organelle transport. In Strongylocentrotus purpuratus (Purple sea urchin), this protein is Kinesin heavy chain.